Reading from the N-terminus, the 282-residue chain is Stress response regulator protein 1 (282 aa).

Composition is skewed to low complexity over residues 12–30 (NLSR…HSST) and 45–58 (NSQS…SNNN). 3 disordered regions span residues 12–31 (NLSR…SSTV), 43–84 (DINS…DDED), and 112–139 (LTPF…TTVV). Positions 66–77 (SDYNSYTHNQYY) are enriched in polar residues. Over residues 125 to 139 (SIISSKSSNKSTTVV) the composition is skewed to low complexity. In terms of domain architecture, Response regulatory spans 155–273 (SFLIVDDNII…LDFMANSIDD (119 aa)). At Asp206 the chain carries 4-aspartylphosphate.

In terms of biological role, required for stress adaptation, morphogenesis and virulence. The protein is Stress response regulator protein 1 (SRR1) of Candida albicans (strain SC5314 / ATCC MYA-2876) (Yeast).